Reading from the N-terminus, the 236-residue chain is Chaperone protein TorD (236 aa).

Belongs to the TorD/DmsD family. TorD subfamily.

Its subcellular location is the cytoplasm. In terms of biological role, involved in the biogenesis of TorA. Acts on TorA before the insertion of the molybdenum cofactor and, as a result, probably favors a conformation of the apoenzyme that is competent for acquiring the cofactor. This is Chaperone protein TorD from Colwellia psychrerythraea (strain 34H / ATCC BAA-681) (Vibrio psychroerythus).